The primary structure comprises 603 residues: Aspartate--tRNA(Asp/Asn) ligase (603 aa).

The interval 205–208 (QLFK) is aspartate. Arginine 227 lines the L-aspartate pocket. Residues 227–229 (RDE) and glutamine 236 each bind ATP. Histidine 463 contacts L-aspartate. Glutamate 497 is a binding site for ATP. Arginine 504 serves as a coordination point for L-aspartate. 549-552 (GMDR) is an ATP binding site.

The protein belongs to the class-II aminoacyl-tRNA synthetase family. Type 1 subfamily. As to quaternary structure, homodimer.

It localises to the cytoplasm. It carries out the reaction tRNA(Asx) + L-aspartate + ATP = L-aspartyl-tRNA(Asx) + AMP + diphosphate. Its function is as follows. Aspartyl-tRNA synthetase with relaxed tRNA specificity since it is able to aspartylate not only its cognate tRNA(Asp) but also tRNA(Asn). Reaction proceeds in two steps: L-aspartate is first activated by ATP to form Asp-AMP and then transferred to the acceptor end of tRNA(Asp/Asn). This is Aspartate--tRNA(Asp/Asn) ligase from Anaeromyxobacter dehalogenans (strain 2CP-1 / ATCC BAA-258).